We begin with the raw amino-acid sequence, 412 residues long: Multifunctional CCA protein (412 aa).

2 residues coordinate ATP: Gly8 and Arg11. CTP is bound by residues Gly8 and Arg11. 2 residues coordinate Mg(2+): Glu21 and Asp23. Residues Arg91, Arg137, and Arg140 each coordinate ATP. CTP is bound by residues Arg91, Arg137, and Arg140. The 102-residue stretch at 228-329 (CGIHTLMSLQ…WRLLQRLDVL (102 aa)) folds into the HD domain.

Belongs to the tRNA nucleotidyltransferase/poly(A) polymerase family. Bacterial CCA-adding enzyme type 1 subfamily. Monomer. Can also form homodimers and oligomers. It depends on Mg(2+) as a cofactor. Requires Ni(2+) as cofactor.

The catalysed reaction is a tRNA precursor + 2 CTP + ATP = a tRNA with a 3' CCA end + 3 diphosphate. It carries out the reaction a tRNA with a 3' CCA end + 2 CTP + ATP = a tRNA with a 3' CCACCA end + 3 diphosphate. In terms of biological role, catalyzes the addition and repair of the essential 3'-terminal CCA sequence in tRNAs without using a nucleic acid template. Adds these three nucleotides in the order of C, C, and A to the tRNA nucleotide-73, using CTP and ATP as substrates and producing inorganic pyrophosphate. tRNA 3'-terminal CCA addition is required both for tRNA processing and repair. Also involved in tRNA surveillance by mediating tandem CCA addition to generate a CCACCA at the 3' terminus of unstable tRNAs. While stable tRNAs receive only 3'-terminal CCA, unstable tRNAs are marked with CCACCA and rapidly degraded. The protein is Multifunctional CCA protein of Acinetobacter baumannii (strain ATCC 17978 / DSM 105126 / CIP 53.77 / LMG 1025 / NCDC KC755 / 5377).